Reading from the N-terminus, the 247-residue chain is 5-oxoprolinase subunit A (247 aa).

It belongs to the LamB/PxpA family. Forms a complex composed of PxpA, PxpB and PxpC.

It carries out the reaction 5-oxo-L-proline + ATP + 2 H2O = L-glutamate + ADP + phosphate + H(+). In terms of biological role, catalyzes the cleavage of 5-oxoproline to form L-glutamate coupled to the hydrolysis of ATP to ADP and inorganic phosphate. The polypeptide is 5-oxoprolinase subunit A (Ralstonia pickettii (strain 12J)).